The sequence spans 259 residues: MYILKIAYDGRYSFQQQPHKQTVCDILLDALEETGFLAKKKVIYSGGRTDKGVSALGNFVVVELKKEPILSYINAKLKDKGIWVLGYREIDEIPKVKYRHYRYILPNIGYDVDAIKEGAKKMIGTHSFHNLSKRDRTKEKSPIRTIYDIKISENEFYLTVDIIGESFLWNMVRKIVGALDLVGRGKKPVEWIDKLLDENHREGVPTFPPEGLILVEAKVDIEYIYDNYSIRKFKEYWGEFFKLQVMKIGIAKTVLEFTK.

Asp50 acts as the Nucleophile in catalysis. Residue Tyr101 participates in substrate binding.

Belongs to the tRNA pseudouridine synthase TruA family.

It carries out the reaction uridine(38/39/40) in tRNA = pseudouridine(38/39/40) in tRNA. Formation of pseudouridine at positions 38, 39 and 40 in the anticodon stem and loop of transfer RNAs. The sequence is that of tRNA pseudouridine synthase A from Methanocaldococcus jannaschii (strain ATCC 43067 / DSM 2661 / JAL-1 / JCM 10045 / NBRC 100440) (Methanococcus jannaschii).